The sequence spans 33 residues: Cytochrome b6-f complex subunit 7 (33 aa).

Residues 5–25 form a helical membrane-spanning segment; it reads IFNTAVITFTLVLVGLGAGYL.

Belongs to the PetM family. The 4 large subunits of the cytochrome b6-f complex are cytochrome b6, subunit IV (17 kDa polypeptide, PetD), cytochrome f and the Rieske protein, while the 4 small subunits are PetG, PetL, PetM and PetN. The complex functions as a dimer.

The protein resides in the cellular thylakoid membrane. Its function is as follows. Component of the cytochrome b6-f complex, which mediates electron transfer between photosystem II (PSII) and photosystem I (PSI), cyclic electron flow around PSI, and state transitions. The protein is Cytochrome b6-f complex subunit 7 of Thermosynechococcus vestitus (strain NIES-2133 / IAM M-273 / BP-1).